The following is a 95-amino-acid chain: uncharacterized protein (95 aa).

This is an uncharacterized protein from Dictyostelium discoideum (Social amoeba).